The following is a 365-amino-acid chain: Putative agmatine deiminase (365 aa).

Residue C357 is the Amidino-cysteine intermediate of the active site.

The protein belongs to the agmatine deiminase family.

It catalyses the reaction agmatine + H2O = N-carbamoylputrescine + NH4(+). The sequence is that of Putative agmatine deiminase from Yersinia pseudotuberculosis serotype O:1b (strain IP 31758).